A 179-amino-acid polypeptide reads, in one-letter code: Interleukin-10 (179 aa).

The signal sequence occupies residues 1–19; sequence MPSPALLCCCLVLLAGVGA. 2 disulfides stabilise this stretch: Cys31/Cys127 and Cys81/Cys133. Asn135 carries N-linked (GlcNAc...) asparagine glycosylation.

Belongs to the IL-10 family. In terms of assembly, homodimer. Interacts with IL10RA and IL10RB.

The protein resides in the secreted. Functionally, major immune regulatory cytokine that acts on many cells of the immune system where it has profound anti-inflammatory functions, limiting excessive tissue disruption caused by inflammation. Mechanistically, IL10 binds to its heterotetrameric receptor comprising IL10RA and IL10RB leading to JAK1 and STAT2-mediated phosphorylation of STAT3. In turn, STAT3 translocates to the nucleus where it drives expression of anti-inflammatory mediators. Targets antigen-presenting cells (APCs) such as macrophages and monocytes and inhibits their release of pro-inflammatory cytokines including granulocyte-macrophage colony-stimulating factor /GM-CSF, granulocyte colony-stimulating factor/G-CSF, IL-1 alpha, IL-1 beta, IL-6, IL-8 and TNF-alpha. Also interferes with antigen presentation by reducing the expression of MHC-class II and co-stimulatory molecules, thereby inhibiting their ability to induce T cell activation. In addition, controls the inflammatory response of macrophages by reprogramming essential metabolic pathways including mTOR signaling. The protein is Interleukin-10 (IL10) of Vulpes vulpes (Red fox).